Consider the following 682-residue polypeptide: Solute carrier organic anion transporter family member 2B1 (682 aa).

Residues 1 to 30 (MPDRSTKATMGAEDIHERKVSMEPRDSHQD) form a disordered region. Residues 1–41 (MPDRSTKATMGAEDIHERKVSMEPRDSHQDAQPRGMFQNIK) are Cytoplasmic-facing. The span at 13–30 (EDIHERKVSMEPRDSHQD) shows a compositional bias: basic and acidic residues. Serine 21 carries the post-translational modification Phosphoserine. Residues 42 to 61 (FFVLCHSILQLAQLMISGYL) form a helical membrane-spanning segment. The Extracellular segment spans residues 62–80 (KSSISTVEKRFGLSSQTSG). Residues 81–101 (LLAAFNEVGNISLILFVSYFG) form a helical membrane-spanning segment. The Cytoplasmic segment spans residues 102–107 (SRVHRP). Residues 108–132 (RMIGCGAILVAVAGLLMALPHFISE) traverse the membrane as a helical segment. Residues 133-176 (PYRYDHSSPDRSQDFEASLCLPTTMAPASALSNDSCSSRTETKH) are Extracellular-facing. Asparagine 165 carries N-linked (GlcNAc...) asparagine glycosylation. A helical membrane pass occupies residues 177–206 (LTMVGIMFTAQTLLGIGGVPIQPFGISYID). Topologically, residues 207 to 225 (DFAHHSNSPLYLGILFAIT) are cytoplasmic. Residues 226–246 (MMGPGLAYGLGSLMLRLYVDI) traverse the membrane as a helical segment. The Extracellular segment spans residues 247 to 264 (DRMPEGGINLTTKDPRWV). N-linked (GlcNAc...) asparagine glycosylation occurs at asparagine 255. Residues 265 to 289 (GAWWLGFLISAGLVVLAASPYFFFP) form a helical membrane-spanning segment. The Cytoplasmic portion of the chain corresponds to 290–354 (REMPKEKYEL…IKVFPRVLLR (65 aa)). Residues serine 311 and serine 314 each carry the phosphoserine modification. Residues 355–376 (TLRHPIFLLVVLSQVCTSSMVA) traverse the membrane as a helical segment. The Extracellular portion of the chain corresponds to 377 to 396 (GTATFLPKFLERQFSITASF). The chain crosses the membrane as a helical span at residues 397 to 420 (ANLLLGCLTIPLAIVGIVVGGVLV). The Cytoplasmic portion of the chain corresponds to 421-424 (KRLH). Residues 425 to 448 (LSPMQCSALCLLGSLLCLLLSLPL) traverse the membrane as a helical segment. Residues 449–552 (FFIGCSTHHI…SACSRLVLPF (104 aa)) lie on the Extracellular side of the membrane. One can recognise a Kazal-like domain in the interval 471 to 531 (PSLFPGCSEP…VFYTNCSCVA (61 aa)). 3 disulfide bridges follow: cysteine 477/cysteine 508, cysteine 483/cysteine 504, and cysteine 492/cysteine 529. N-linked (GlcNAc...) asparagine glycosylation is found at asparagine 526 and asparagine 533. A helical membrane pass occupies residues 553 to 575 (ILLISLGAAVASITHTPSFMLIL). The Cytoplasmic portion of the chain corresponds to 576–584 (RGVKKEDKT). A helical transmembrane segment spans residues 585–610 (LAVGMQFMLLRVLAWMPSPVIHGSAI). Residues 611 to 643 (DTTCVHWALTCGRRAVCRYYDHDLLRNRFIGLQ) are Extracellular-facing. The chain crosses the membrane as a helical span at residues 644–661 (FFFKSGSLVCFALVLAIL). Residues 662–682 (RQQSREASTKATVKSSDLQEL) lie on the Cytoplasmic side of the membrane.

This sequence belongs to the organo anion transporter (TC 2.A.60) family. As to expression, expressed in liver, kidney, heart, lung and retina. Widely distributed in all brain regions.

It localises to the cell membrane. The protein resides in the basal cell membrane. It is found in the apical cell membrane. It catalyses the reaction coproporphyrin III(out) = coproporphyrin III(in). The catalysed reaction is substance P(out) = substance P(in). The enzyme catalyses taurocholate(out) = taurocholate(in). It carries out the reaction prostaglandin E1(out) = prostaglandin E1(in). It catalyses the reaction prostaglandin E2(out) = prostaglandin E2(in). The catalysed reaction is prostaglandin D2(out) = prostaglandin D2(in). The enzyme catalyses leukotriene C4(out) = leukotriene C4(in). It carries out the reaction L-thyroxine(out) = L-thyroxine(in). Functionally, mediates the Na(+)-independent transport of organic anions such as taurocholate, the prostaglandins D2 (PGD2), E1 (PGE1) and E2 (PGE2), leukotriene C4, thromboxane B2 and L-thyroxine. Also plays a role in the reuptake of neuropeptides such as substance P/TAC1 and vasoactive intestinal peptide/VIP released from retinal neurons. May act as a heme transporter that promotes cellular iron availability. Also transports heme by-product coproporphyrin III (CPIII), and may be involved in their hepatic disposition. May contribute to regulate the transport of organic compounds in testis across the blood-testis-barrier. Shows a pH-sensitive substrate specificity which may be ascribed to the protonation state of the binding site and leads to a stimulation of substrate transport in an acidic microenvironment. The exact transport mechanism has not been yet deciphered but most likely involves an anion exchange, coupling the cellular uptake of organic substrate with the efflux of an anionic compound. Hydrogencarbonate/HCO3(-) acts as a probable counteranion that exchanges for organic anions. Cytoplasmic glutamate may also act as counteranion in the placenta. The protein is Solute carrier organic anion transporter family member 2B1 of Rattus norvegicus (Rat).